A 512-amino-acid polypeptide reads, in one-letter code: MTKKFVGLIILDGLGLTDQKENNAFHLAKTPYLDYLLKNFPNTTLKASGEEVGLPQGQMGNSEVGHLNLGAGRVVYQSLTQINKAIRDKTFFTNKQFLQAIEHVKKNNSKIHLLGLISDGGIHSHLDHFKALFDLLKENNLANNTFLHAFTDGRDTGTHSGINYIKNLLDYGFNIASVAGRYYALDRDNNWDRINLVYNMLTSKQAPVITLSLEKTMQNFYNQGITDEFITPFITDPNGLIDDNDAVIFVNFRPDRAMRLATALSNPCATNAFCSEGKTNFCGNKLVNNLFLVTMTQYNVQVKSVVAFEKKTLKNIYGEVIANLGMHQLRISETEKYPHVTFFFDGGKELQLKNADRILIPSPKVKTYDLKPEMSALEITNAAKTAIFSRKYDTLILNFANPDMVGHTGFLDATIKAVQTVDSCLKEVLNAIFAVKGKACIVADHGNAEKMKDNQGNPHTAHTTNLVPFIVTDKNVVLKPGSLCDVAPTMLDLLEIKKPQEMTGNSLIKKLV.

Asp12 and Ser62 together coordinate Mn(2+). The Phosphoserine intermediate role is filled by Ser62. Substrate-binding positions include His123, 154–155 (RD), Arg181, Arg187, 253–256 (RPDR), and Lys336. Mn(2+) contacts are provided by Asp403, His407, Asp444, His445, and His462.

It belongs to the BPG-independent phosphoglycerate mutase family. As to quaternary structure, monomer. It depends on Mn(2+) as a cofactor.

It carries out the reaction (2R)-2-phosphoglycerate = (2R)-3-phosphoglycerate. It functions in the pathway carbohydrate degradation; glycolysis; pyruvate from D-glyceraldehyde 3-phosphate: step 3/5. Catalyzes the interconversion of 2-phosphoglycerate and 3-phosphoglycerate. The polypeptide is 2,3-bisphosphoglycerate-independent phosphoglycerate mutase (Aster yellows witches'-broom phytoplasma (strain AYWB)).